We begin with the raw amino-acid sequence, 347 residues long: Phenylalanine--tRNA ligase alpha subunit (347 aa).

Glu265 serves as a coordination point for Mg(2+).

This sequence belongs to the class-II aminoacyl-tRNA synthetase family. Phe-tRNA synthetase alpha subunit type 1 subfamily. Tetramer of two alpha and two beta subunits. Mg(2+) is required as a cofactor.

Its subcellular location is the cytoplasm. It carries out the reaction tRNA(Phe) + L-phenylalanine + ATP = L-phenylalanyl-tRNA(Phe) + AMP + diphosphate + H(+). In Wolbachia sp. subsp. Drosophila simulans (strain wRi), this protein is Phenylalanine--tRNA ligase alpha subunit.